Reading from the N-terminus, the 298-residue chain is Foldase protein PrsA 1 (298 aa).

Positions 1 to 23 (MNKTWKKAATVLAFAGIALSATA) are cleaved as a signal peptide. Residue C24 is the site of N-palmitoyl cysteine attachment. C24 carries the S-diacylglycerol cysteine lipid modification. The PpiC domain occupies 141–234 (QPEVTVQHIL…YGYHVIKMIK (94 aa)).

Belongs to the PrsA family.

It localises to the cell membrane. It catalyses the reaction [protein]-peptidylproline (omega=180) = [protein]-peptidylproline (omega=0). Its function is as follows. Plays a major role in protein secretion by helping the post-translocational extracellular folding of several secreted proteins. The sequence is that of Foldase protein PrsA 1 (prsA1) from Lactobacillus johnsonii (strain CNCM I-12250 / La1 / NCC 533).